The following is an 89-amino-acid chain: Small ribosomal subunit protein uS15 (89 aa).

It belongs to the universal ribosomal protein uS15 family. As to quaternary structure, part of the 30S ribosomal subunit. Forms a bridge to the 50S subunit in the 70S ribosome, contacting the 23S rRNA.

In terms of biological role, one of the primary rRNA binding proteins, it binds directly to 16S rRNA where it helps nucleate assembly of the platform of the 30S subunit by binding and bridging several RNA helices of the 16S rRNA. Functionally, forms an intersubunit bridge (bridge B4) with the 23S rRNA of the 50S subunit in the ribosome. The sequence is that of Small ribosomal subunit protein uS15 from Streptococcus uberis (strain ATCC BAA-854 / 0140J).